We begin with the raw amino-acid sequence, 1372 residues long: DNA-directed RNA polymerase subunit beta (1372 aa).

The protein belongs to the RNA polymerase beta chain family. As to quaternary structure, the RNAP catalytic core consists of 2 alpha, 1 beta, 1 beta' and 1 omega subunit. When a sigma factor is associated with the core the holoenzyme is formed, which can initiate transcription.

It carries out the reaction RNA(n) + a ribonucleoside 5'-triphosphate = RNA(n+1) + diphosphate. Functionally, DNA-dependent RNA polymerase catalyzes the transcription of DNA into RNA using the four ribonucleoside triphosphates as substrates. This Bradyrhizobium sp. (strain BTAi1 / ATCC BAA-1182) protein is DNA-directed RNA polymerase subunit beta.